Here is a 200-residue protein sequence, read N- to C-terminus: Guanylate kinase (200 aa).

Residues 6 to 184 enclose the Guanylate kinase-like domain; sequence GLLIVLSGPS…AVDKLKSILL (179 aa). 13–20 contributes to the ATP binding site; that stretch reads GPSGAGKG.

This sequence belongs to the guanylate kinase family.

It localises to the cytoplasm. The enzyme catalyses GMP + ATP = GDP + ADP. Essential for recycling GMP and indirectly, cGMP. This is Guanylate kinase from Desulfitobacterium hafniense (strain Y51).